A 908-amino-acid polypeptide reads, in one-letter code: Disease resistance protein RPP8 (908 aa).

Positions 15–57 form a coiled coil; the sequence is DLLSRESERLQGIDGQLDGLKRQLRSLQSLLKDADAKKHGSDR. An NB-ARC domain is found at 146 to 459; the sequence is RQRVQREIRQ…AEGIYDGSTI (314 aa). Residue 192–199 participates in ATP binding; sequence GMGGIGKT. LRR repeat units follow at residues 575–600, 601–623, 648–673, 693–718, 722–746, 748–770, 793–820, 842–867, and 882–905; these read LTLLRVLDLSWVKFEGGKLPCSIGGL, IHLRYLSLYEAKVSHLPSTMRNL, MIQLRYLSLPLKMDDKTKLELGDLVN, MTKLRYLAVSLSERCNFETLSSSLRE, LETLNFLFSLETYMVDYMGEFVLDH, IHLKQLGLAVRMSKIPDQHQFPP, LLHLKSVRLARKAFLGSRMVCSKGGFPQ, MPCLRTLTIDDCKKLKELPDGLKYIT, and KEKLVPGGEDYYKVQHIPDVQFIN.

This sequence belongs to the disease resistance NB-LRR family. RPP8/HRT subfamily. Interacts with the NAC protein TIP. Interacts with MORC1/CRT1. Interacts with COP1 and is subsequently degraded in a 26s proteasome dependent manner. In terms of tissue distribution, mostly expressed in leaves, and, to a lower extent, in roots.

The protein resides in the cell membrane. In terms of biological role, disease resistance protein. Resistance proteins guard the plant against pathogens that contain an appropriate avirulence protein via an indirect interaction with this avirulence protein. That triggers a defense system including the hypersensitive response, which restricts the pathogen growth. The interaction with TIP (TCV-interacting protein) may be essential for the recognition of the avirulence proteins, and the triggering of the defense response. Triggers resistance to turnip crinkle virus (TCV) via a SAG101-dependent pathway. The chain is Disease resistance protein RPP8 (RPP8) from Arabidopsis thaliana (Mouse-ear cress).